The sequence spans 173 residues: MSIILGIDPGSRITGYGVIRQVGRQLTYLGSGCIRTKVDDLPSRLKLIYAGVTEIITQFQPDYFAIEQVFMAKNADSALKLGQARGVAIVAAVNQELPVFEYAARQVKQTVVGIGSAEKSQVQHMVRTLLKLPANPQADAADALAIAITHCHVSQNVMQMSESRLNLARGRLR.

Active-site residues include aspartate 8, glutamate 67, and aspartate 139. Aspartate 8, glutamate 67, and aspartate 139 together coordinate Mg(2+).

This sequence belongs to the RuvC family. As to quaternary structure, homodimer which binds Holliday junction (HJ) DNA. The HJ becomes 2-fold symmetrical on binding to RuvC with unstacked arms; it has a different conformation from HJ DNA in complex with RuvA. In the full resolvosome a probable DNA-RuvA(4)-RuvB(12)-RuvC(2) complex forms which resolves the HJ. The cofactor is Mg(2+).

It is found in the cytoplasm. It carries out the reaction Endonucleolytic cleavage at a junction such as a reciprocal single-stranded crossover between two homologous DNA duplexes (Holliday junction).. Functionally, the RuvA-RuvB-RuvC complex processes Holliday junction (HJ) DNA during genetic recombination and DNA repair. Endonuclease that resolves HJ intermediates. Cleaves cruciform DNA by making single-stranded nicks across the HJ at symmetrical positions within the homologous arms, yielding a 5'-phosphate and a 3'-hydroxyl group; requires a central core of homology in the junction. The consensus cleavage sequence is 5'-(A/T)TT(C/G)-3'. Cleavage occurs on the 3'-side of the TT dinucleotide at the point of strand exchange. HJ branch migration catalyzed by RuvA-RuvB allows RuvC to scan DNA until it finds its consensus sequence, where it cleaves and resolves the cruciform DNA. The polypeptide is Crossover junction endodeoxyribonuclease RuvC (Salmonella paratyphi C (strain RKS4594)).